A 75-amino-acid chain; its full sequence is Putative defensin-like protein 55 (75 aa).

Positions 1–19 (MNITKAYVIFFLVVILTNS) are cleaved as a signal peptide. 4 disulfides stabilise this stretch: C39/C73, C43/C66, C52/C71, and C56/C72.

This sequence belongs to the DEFL family.

It is found in the secreted. The sequence is that of Putative defensin-like protein 55 from Arabidopsis thaliana (Mouse-ear cress).